Here is a 271-residue protein sequence, read N- to C-terminus: 4-hydroxy-tetrahydrodipicolinate reductase (271 aa).

NAD(+) is bound by residues 11–16, E37, 102–104, and 126–129; these read GAAGRM, GTT, and AGNM. The active-site Proton donor/acceptor is H159. (S)-2,3,4,5-tetrahydrodipicolinate is bound at residue H160. Catalysis depends on K163, which acts as the Proton donor. Residue 169–170 coordinates (S)-2,3,4,5-tetrahydrodipicolinate; it reads GT.

It belongs to the DapB family.

It is found in the cytoplasm. The enzyme catalyses (S)-2,3,4,5-tetrahydrodipicolinate + NAD(+) + H2O = (2S,4S)-4-hydroxy-2,3,4,5-tetrahydrodipicolinate + NADH + H(+). The catalysed reaction is (S)-2,3,4,5-tetrahydrodipicolinate + NADP(+) + H2O = (2S,4S)-4-hydroxy-2,3,4,5-tetrahydrodipicolinate + NADPH + H(+). The protein operates within amino-acid biosynthesis; L-lysine biosynthesis via DAP pathway; (S)-tetrahydrodipicolinate from L-aspartate: step 4/4. Functionally, catalyzes the conversion of 4-hydroxy-tetrahydrodipicolinate (HTPA) to tetrahydrodipicolinate. The polypeptide is 4-hydroxy-tetrahydrodipicolinate reductase (Parvibaculum lavamentivorans (strain DS-1 / DSM 13023 / NCIMB 13966)).